Consider the following 180-residue polypeptide: Small ribosomal subunit protein uS5 (180 aa).

Positions 13–76 constitute an S5 DRBM domain; it reads LEERVVQINR…EAAKKNLIRV (64 aa).

This sequence belongs to the universal ribosomal protein uS5 family. As to quaternary structure, part of the 30S ribosomal subunit. Contacts proteins S4 and S8.

With S4 and S12 plays an important role in translational accuracy. Functionally, located at the back of the 30S subunit body where it stabilizes the conformation of the head with respect to the body. The polypeptide is Small ribosomal subunit protein uS5 (Roseiflexus sp. (strain RS-1)).